The chain runs to 150 residues: Transcriptional repressor NrdR (150 aa).

The interval Met1 to Arg26 is disordered. Residues Cys3–Cys34 fold into a zinc finger. The ATP-cone domain maps to Pro49–Glu139.

The protein belongs to the NrdR family. Zn(2+) serves as cofactor.

Its function is as follows. Negatively regulates transcription of bacterial ribonucleotide reductase nrd genes and operons by binding to NrdR-boxes. The polypeptide is Transcriptional repressor NrdR (Pelobacter propionicus (strain DSM 2379 / NBRC 103807 / OttBd1)).